We begin with the raw amino-acid sequence, 180 residues long: MITFPVSLSADWQCASLFSDLSSAEQEWLFEPHSLTAKLKSRSQCFSVKVLSEQEFELSAEQQQLLGCTQTTALNREVLLLCDNKPVVYAQSWLPASVNAANNKLHNMGERPLGDVIFQDPQLTRTDIEIARFNTQHSLQQLVAQLKLPSQSLLGRRSLFSLKDYKFLVCEVFLPGAYLY.

Substrate-binding residues include R76, L113, and E171.

It belongs to the UbiC family.

It is found in the cytoplasm. The enzyme catalyses chorismate = 4-hydroxybenzoate + pyruvate. The protein operates within cofactor biosynthesis; ubiquinone biosynthesis. In terms of biological role, removes the pyruvyl group from chorismate, with concomitant aromatization of the ring, to provide 4-hydroxybenzoate (4HB) for the ubiquinone pathway. This Pseudoalteromonas translucida (strain TAC 125) protein is Probable chorismate pyruvate-lyase.